The following is a 343-amino-acid chain: Ribosomal RNA small subunit methyltransferase C (343 aa).

This sequence belongs to the methyltransferase superfamily. RsmC family. Monomer.

It is found in the cytoplasm. The enzyme catalyses guanosine(1207) in 16S rRNA + S-adenosyl-L-methionine = N(2)-methylguanosine(1207) in 16S rRNA + S-adenosyl-L-homocysteine + H(+). Its function is as follows. Specifically methylates the guanine in position 1207 of 16S rRNA in the 30S particle. This Shigella boydii serotype 4 (strain Sb227) protein is Ribosomal RNA small subunit methyltransferase C.